The chain runs to 730 residues: Jacalin-related lectin 5 (730 aa).

Positions 1–126 (MSWDDGKHTK…LNSIDAHFAP (126 aa)) constitute a Jacalin-type lectin 1 domain. Residues 121 to 450 (DAHFAPAPPP…GNQWDDGTDH (330 aa)) are disordered. Composition is skewed to low complexity over residues 138–153 (GASGIGSDSGSIGSAG), 168–179 (AGGSKPSSGSAG), 196–207 (AGGSKPSSGSAG), and 248–261 (TEKNAGGSKSSSGS). Residues 275-307 (ETVSNIGDTESNAGGSKSNDGANNGASGIESNA) are compositionally biased toward polar residues. The span at 314 to 323 (FGAGGTGGIG) shows a compositional bias: gly residues. The span at 343–358 (DGASGIGSNDGSTGTN) shows a compositional bias: low complexity. 2 stretches are compositionally biased toward polar residues: residues 366–375 (DSNIEGTENN) and 388–416 (IGNSDGSTGTSPEGTESNADGTKTNTGGK). Residues 417–429 (ESNTGSESNTNSS) are compositionally biased toward low complexity. Jacalin-type lectin domains are found at residues 430–572 (PQKL…YFVP) and 584–727 (PNKV…YFIP).

It belongs to the jacalin lectin family.

The polypeptide is Jacalin-related lectin 5 (JAL5) (Arabidopsis thaliana (Mouse-ear cress)).